Here is a 97-residue protein sequence, read N- to C-terminus: Co-chaperonin GroES (97 aa).

It belongs to the GroES chaperonin family. Heptamer of 7 subunits arranged in a ring. Interacts with the chaperonin GroEL.

Its subcellular location is the cytoplasm. In terms of biological role, together with the chaperonin GroEL, plays an essential role in assisting protein folding. The GroEL-GroES system forms a nano-cage that allows encapsulation of the non-native substrate proteins and provides a physical environment optimized to promote and accelerate protein folding. GroES binds to the apical surface of the GroEL ring, thereby capping the opening of the GroEL channel. The polypeptide is Co-chaperonin GroES (Azotobacter vinelandii (strain DJ / ATCC BAA-1303)).